The primary structure comprises 254 residues: Probable transcriptional regulatory protein MAE_13580 (254 aa).

It belongs to the TACO1 family.

It localises to the cytoplasm. The protein is Probable transcriptional regulatory protein MAE_13580 of Microcystis aeruginosa (strain NIES-843 / IAM M-2473).